The primary structure comprises 313 residues: Adhesin MafA 1/2 (313 aa).

An N-terminal signal peptide occupies residues 1-14; it reads MKTLLLLIPLVLTA. Cys-15 is lipidated: N-palmitoyl cysteine. Cys-15 carries the S-diacylglycerol cysteine lipid modification. Residues 282–298 are compositionally biased toward polar residues; it reads GDTTAQNRPDFKQNNGK. The tract at residues 282 to 313 is disordered; sequence GDTTAQNRPDFKQNNGKNPDVGNEVIRRRKGG.

This sequence belongs to the MafA family.

The protein localises to the cell outer membrane. The chain is Adhesin MafA 1/2 (mafA1) from Neisseria meningitidis serogroup C (strain 053442).